The sequence spans 953 residues: UvrABC system protein A (953 aa).

33-40 (GLSGSGKS) serves as a coordination point for ATP. ABC transporter domains follow at residues 320 to 599 (WGST…EESI) and 619 to 949 (GHDN…RYLK). 652-659 (GVSGSGKS) serves as a coordination point for ATP. Residues 752–778 (CEACQGDGLIKIEMHFLPDVYVKCDIC) form a C4-type zinc finger.

Belongs to the ABC transporter superfamily. UvrA family. In terms of assembly, forms a heterotetramer with UvrB during the search for lesions.

Its subcellular location is the cytoplasm. In terms of biological role, the UvrABC repair system catalyzes the recognition and processing of DNA lesions. UvrA is an ATPase and a DNA-binding protein. A damage recognition complex composed of 2 UvrA and 2 UvrB subunits scans DNA for abnormalities. When the presence of a lesion has been verified by UvrB, the UvrA molecules dissociate. The chain is UvrABC system protein A from Rickettsia typhi (strain ATCC VR-144 / Wilmington).